A 357-amino-acid polypeptide reads, in one-letter code: tRNA N6-adenosine threonylcarbamoyltransferase (357 aa).

Fe cation is bound by residues histidine 115 and histidine 119. Residues 137-141 (LASGG), aspartate 170, glycine 183, and asparagine 281 contribute to the substrate site. Aspartate 309 contacts Fe cation.

It belongs to the KAE1 / TsaD family. Fe(2+) serves as cofactor.

It is found in the cytoplasm. It catalyses the reaction L-threonylcarbamoyladenylate + adenosine(37) in tRNA = N(6)-L-threonylcarbamoyladenosine(37) in tRNA + AMP + H(+). Required for the formation of a threonylcarbamoyl group on adenosine at position 37 (t(6)A37) in tRNAs that read codons beginning with adenine. Is involved in the transfer of the threonylcarbamoyl moiety of threonylcarbamoyl-AMP (TC-AMP) to the N6 group of A37, together with TsaE and TsaB. TsaD likely plays a direct catalytic role in this reaction. This Nitrobacter winogradskyi (strain ATCC 25391 / DSM 10237 / CIP 104748 / NCIMB 11846 / Nb-255) protein is tRNA N6-adenosine threonylcarbamoyltransferase.